We begin with the raw amino-acid sequence, 278 residues long: 4-hydroxy-tetrahydrodipicolinate reductase (278 aa).

Residues Gly-13–Met-18 and Gly-111–Thr-113 each bind NAD(+). His-167 functions as the Proton donor/acceptor in the catalytic mechanism. His-168 contributes to the (S)-2,3,4,5-tetrahydrodipicolinate binding site. Lys-171 serves as the catalytic Proton donor. Gly-177–Thr-178 serves as a coordination point for (S)-2,3,4,5-tetrahydrodipicolinate.

The protein belongs to the DapB family.

It is found in the cytoplasm. The catalysed reaction is (S)-2,3,4,5-tetrahydrodipicolinate + NAD(+) + H2O = (2S,4S)-4-hydroxy-2,3,4,5-tetrahydrodipicolinate + NADH + H(+). It catalyses the reaction (S)-2,3,4,5-tetrahydrodipicolinate + NADP(+) + H2O = (2S,4S)-4-hydroxy-2,3,4,5-tetrahydrodipicolinate + NADPH + H(+). Its pathway is amino-acid biosynthesis; L-lysine biosynthesis via DAP pathway; (S)-tetrahydrodipicolinate from L-aspartate: step 4/4. Functionally, catalyzes the conversion of 4-hydroxy-tetrahydrodipicolinate (HTPA) to tetrahydrodipicolinate. The sequence is that of 4-hydroxy-tetrahydrodipicolinate reductase from Trichormus variabilis (strain ATCC 29413 / PCC 7937) (Anabaena variabilis).